Consider the following 144-residue polypeptide: Ribosomal RNA large subunit methyltransferase H (144 aa).

S-adenosyl-L-methionine contacts are provided by residues Leu-63, Gly-92, and 111-116 (LSPMTF).

It belongs to the RNA methyltransferase RlmH family. As to quaternary structure, homodimer.

It is found in the cytoplasm. It carries out the reaction pseudouridine(1915) in 23S rRNA + S-adenosyl-L-methionine = N(3)-methylpseudouridine(1915) in 23S rRNA + S-adenosyl-L-homocysteine + H(+). Its function is as follows. Specifically methylates the pseudouridine at position 1915 (m3Psi1915) in 23S rRNA. The protein is Ribosomal RNA large subunit methyltransferase H of Parasynechococcus marenigrum (strain WH8102).